A 145-amino-acid chain; its full sequence is D-aminoacyl-tRNA deacylase (145 aa).

The Gly-cisPro motif, important for rejection of L-amino acids signature appears at 137–138 (GP).

This sequence belongs to the DTD family. As to quaternary structure, homodimer.

It is found in the cytoplasm. It carries out the reaction glycyl-tRNA(Ala) + H2O = tRNA(Ala) + glycine + H(+). The enzyme catalyses a D-aminoacyl-tRNA + H2O = a tRNA + a D-alpha-amino acid + H(+). In terms of biological role, an aminoacyl-tRNA editing enzyme that deacylates mischarged D-aminoacyl-tRNAs. Also deacylates mischarged glycyl-tRNA(Ala), protecting cells against glycine mischarging by AlaRS. Acts via tRNA-based rather than protein-based catalysis; rejects L-amino acids rather than detecting D-amino acids in the active site. By recycling D-aminoacyl-tRNA to D-amino acids and free tRNA molecules, this enzyme counteracts the toxicity associated with the formation of D-aminoacyl-tRNA entities in vivo and helps enforce protein L-homochirality. The sequence is that of D-aminoacyl-tRNA deacylase from Exiguobacterium sibiricum (strain DSM 17290 / CCUG 55495 / CIP 109462 / JCM 13490 / 255-15).